A 348-amino-acid polypeptide reads, in one-letter code: Glycerol-1-phosphate dehydrogenase [NAD(P)+] (348 aa).

Residues 94–98 (GKVID) and 116–119 (TTAS) each bind NAD(+). A substrate-binding site is contributed by Asp121. Ser125 is an NAD(+) binding site. Asp168 contacts substrate. The Zn(2+) site is built by Asp168 and His248. His252 contributes to the substrate binding site. A Zn(2+)-binding site is contributed by His264.

It belongs to the glycerol-1-phosphate dehydrogenase family. Homooctamer. Zn(2+) is required as a cofactor.

The protein localises to the cytoplasm. The catalysed reaction is sn-glycerol 1-phosphate + NAD(+) = dihydroxyacetone phosphate + NADH + H(+). It catalyses the reaction sn-glycerol 1-phosphate + NADP(+) = dihydroxyacetone phosphate + NADPH + H(+). It participates in membrane lipid metabolism; glycerophospholipid metabolism. Its function is as follows. Catalyzes the NAD(P)H-dependent reduction of dihydroxyacetonephosphate (DHAP or glycerone phosphate) to glycerol 1-phosphate (G1P). The G1P thus generated is used as the glycerophosphate backbone of phospholipids in the cellular membranes of Archaea. This is Glycerol-1-phosphate dehydrogenase [NAD(P)+] from Methanobrevibacter smithii (strain ATCC 35061 / DSM 861 / OCM 144 / PS).